A 237-amino-acid polypeptide reads, in one-letter code: MNQGYTQLSAPELKETKTSKLNKMNNFRSSPIAEIINKIPPDCGKIQNTTFPEFNPALRRRQHEQWPAYEKPIRVTDSMSPQLSSINCLPNLYPHGTLPLPNPYLSYLNHIEKVNCQDVKFSNWSVLHNSNNGFEIPTYFSPRTTQNMPCSEKVESWLERLPIFVGFDGYLFTNCFDYEYMLDWEETEFTFEKTSCMETDYSKALTDTDIIYIQEKKIEALIRNQYLKEYEFSQKDF.

It is found in the nucleus. The protein localises to the cytoplasm. It localises to the cytoskeleton. The protein resides in the microtubule organizing center. Its subcellular location is the spindle pole body. Involved in the pathway that organizes the shaping and sizing of the prospore membrane (PSM) during sporulation. Required to localize MPC54 to all four spindle pole bodies, and localize DON1 and SPO14 to four prospore membranes. The sequence is that of Prospore formation at selected spindle poles protein 1 (PFS1) from Saccharomyces cerevisiae (strain ATCC 204508 / S288c) (Baker's yeast).